Reading from the N-terminus, the 453-residue chain is Ribosomal protein uS12 methylthiotransferase RimO (453 aa).

The region spanning 9 to 124 (PKVGFVSLGC…VMEAVHTHLP (116 aa)) is the MTTase N-terminal domain. [4Fe-4S] cluster-binding residues include C18, C54, C83, C155, C159, and C162. Residues 141–382 (LTPKHYAYLK…MEVAERVSAR (242 aa)) enclose the Radical SAM core domain. The region spanning 385-453 (QRKVGKSLRV…ADGHDLWGEV (69 aa)) is the TRAM domain.

The protein belongs to the methylthiotransferase family. RimO subfamily. [4Fe-4S] cluster is required as a cofactor.

It localises to the cytoplasm. It catalyses the reaction L-aspartate(89)-[ribosomal protein uS12]-hydrogen + (sulfur carrier)-SH + AH2 + 2 S-adenosyl-L-methionine = 3-methylsulfanyl-L-aspartate(89)-[ribosomal protein uS12]-hydrogen + (sulfur carrier)-H + 5'-deoxyadenosine + L-methionine + A + S-adenosyl-L-homocysteine + 2 H(+). Its function is as follows. Catalyzes the methylthiolation of an aspartic acid residue of ribosomal protein uS12. This Ralstonia pickettii (strain 12J) protein is Ribosomal protein uS12 methylthiotransferase RimO.